A 427-amino-acid polypeptide reads, in one-letter code: Glutamate-1-semialdehyde 2,1-aminomutase (427 aa).

Position 265 is an N6-(pyridoxal phosphate)lysine (Lys265).

The protein belongs to the class-III pyridoxal-phosphate-dependent aminotransferase family. HemL subfamily. As to quaternary structure, homodimer. It depends on pyridoxal 5'-phosphate as a cofactor.

The protein localises to the cytoplasm. The enzyme catalyses (S)-4-amino-5-oxopentanoate = 5-aminolevulinate. It functions in the pathway porphyrin-containing compound metabolism; protoporphyrin-IX biosynthesis; 5-aminolevulinate from L-glutamyl-tRNA(Glu): step 2/2. The sequence is that of Glutamate-1-semialdehyde 2,1-aminomutase from Stutzerimonas stutzeri (strain A1501) (Pseudomonas stutzeri).